The sequence spans 597 residues: Elongation factor 4 (597 aa).

The tr-type G domain maps to 2-184; sequence QHIRNFSIIA…SIVARVPPPK (183 aa). GTP-binding positions include 14 to 19 and 131 to 134; these read DHGKST and NKMD.

It belongs to the TRAFAC class translation factor GTPase superfamily. Classic translation factor GTPase family. LepA subfamily.

It localises to the cell inner membrane. It carries out the reaction GTP + H2O = GDP + phosphate + H(+). Required for accurate and efficient protein synthesis under certain stress conditions. May act as a fidelity factor of the translation reaction, by catalyzing a one-codon backward translocation of tRNAs on improperly translocated ribosomes. Back-translocation proceeds from a post-translocation (POST) complex to a pre-translocation (PRE) complex, thus giving elongation factor G a second chance to translocate the tRNAs correctly. Binds to ribosomes in a GTP-dependent manner. This Bordetella bronchiseptica (strain ATCC BAA-588 / NCTC 13252 / RB50) (Alcaligenes bronchisepticus) protein is Elongation factor 4.